A 224-amino-acid polypeptide reads, in one-letter code: C-&gt;U-editing enzyme APOBEC-2 (224 aa).

A disordered region spans residues 1–24; the sequence is MAQKEEAAVATEAASQNGEDLENL. Positions 60 and 98 each coordinate Zn(2+). Residues 64-169 enclose the CMP/dCMP-type deaminase domain; sequence GRNKTFLCYV…PEIQAALKKL (106 aa). Glutamate 100 serves as the catalytic Proton donor. Positions 128 and 131 each coordinate Zn(2+).

This sequence belongs to the cytidine and deoxycytidylate deaminase family. In terms of assembly, homotetramer. Requires Zn(2+) as cofactor. As to expression, expressed exclusively in heart and skeletal muscle.

The enzyme catalyses cytidine(6666) in apoB mRNA + H2O + H(+) = uridine(6666) in apoB mRNA + NH4(+). In terms of biological role, probable C to U editing enzyme whose physiological substrate is not yet known. Does not display detectable apoB mRNA editing. Has a low intrinsic cytidine deaminase activity. May play a role in the epigenetic regulation of gene expression through the process of active DNA demethylation. The protein is C-&gt;U-editing enzyme APOBEC-2 (APOBEC2) of Homo sapiens (Human).